The chain runs to 436 residues: UPF0597 protein YhaM (436 aa).

The protein belongs to the UPF0597 family.

This chain is UPF0597 protein YhaM, found in Salmonella gallinarum (strain 287/91 / NCTC 13346).